We begin with the raw amino-acid sequence, 413 residues long: uncharacterized protein (413 aa).

This sequence belongs to the mycobacterial PPE family.

This is an uncharacterized protein from Mycobacterium tuberculosis (strain CDC 1551 / Oshkosh).